A 533-amino-acid chain; its full sequence is MLILFETPGGFAIFKVLNEGKLSNVEDLGNEFSTAKLARKMVKLVAFDKFDNTAEALEAVAKLLEGTPSKGLRKFLKANCVGETLAVADSKLGNIIKEKLKIVCVHNNAVMELLRGIRSQLTELISGLGDQDLGPMSLGLSHSLARYKLKFSSDKVDTMIIQAIGLLDDLDKELNTYAMRVREWFGWHFPELAKIVQDNILYAKAVKLMGNRINAAKLDFSEILADEIEAELKEAAVISMGTEVSDLDLLHIRELCDQVLSLAEYRAQLYDYLKSRMNTIAPNLTALVGELVGARLISHGGSLLNLAKQPGSTVQILGAEKALFRALKTKHATPKYGLIFHASVVGQAAPKNKGKISRSLAAKSVLAIRCDALGDSQDNTMGVENRLKLEARLRTLEGKDLGRLSGSAKGKPKIEVYDKDKKKGSGGLITPAKTYNTAADSLLQTPTVDSENGVKEKKDKKKKKKADDEEEAKTEEPSKKKSNKKKTEAEPETAEEPAKKEKKKKRKHEEEETEMPAKKKEKSEKKKKKKTEV.

One can recognise a Nop domain in the interval I280 to G398. The tract at residues G402–V533 is disordered. Basic and acidic residues predominate over residues P412 to K423. Residues K433–S450 show a composition bias toward polar residues. Composition is skewed to basic and acidic residues over residues T474–A489 and M515–E524.

It belongs to the NOP5/NOP56 family.

The protein localises to the nucleus. It is found in the nucleolus. In terms of biological role, required for 60S ribosomal subunit biogenesis. The polypeptide is Probable nucleolar protein 5-1 (NOP5-1) (Arabidopsis thaliana (Mouse-ear cress)).